The following is a 147-amino-acid chain: Small ribosomal subunit protein uS12 (147 aa).

The protein belongs to the universal ribosomal protein uS12 family. Part of the 30S ribosomal subunit.

In terms of biological role, with S4 and S5 plays an important role in translational accuracy. Located at the interface of the 30S and 50S subunits. This Ignicoccus hospitalis (strain KIN4/I / DSM 18386 / JCM 14125) protein is Small ribosomal subunit protein uS12.